The sequence spans 395 residues: Aurora kinase A (395 aa).

A disordered region spans residues 1–114; the sequence is MDRCKENCVS…QASLQKTEDT (114 aa). 2 stretches are compositionally biased toward polar residues: residues 29-60 and 84-99; these read QIPS…SQAQ and RLNN…ASGN. Residues Ser-40 and Ser-50 each carry the phosphoserine modification. Over residues 100-114 the composition is skewed to basic and acidic residues; the sequence is DSEKEQASLQKTEDT. The Protein kinase domain occupies 124–374; sequence FDIGRPLGKG…LAEVLEHPWI (251 aa). Residues Lys-134, Lys-153, and 201-204 each bind ATP; that span reads LEYA. Asp-247 serves as the catalytic Proton acceptor. Lys-249 is covalently cross-linked (Glycyl lysine isopeptide (Lys-Gly) (interchain with G-Cter in SUMO2)). Residues 251–252 and Asp-265 contribute to the ATP site; that span reads EN. Positions 271-284 are activation segment; sequence HAPSSRRTTMCGTL. Thr-278 and Thr-279 each carry phosphothreonine. The residue at position 333 (Ser-333) is a Phosphoserine; by PKA and PAK. Residues 376–385 show a composition bias toward polar residues; sequence ANSSKPPTGH. The disordered stretch occupies residues 376 to 395; that stretch reads ANSSKPPTGHTSKEPTSKSS. Residues 386 to 395 are compositionally biased toward basic and acidic residues; it reads TSKEPTSKSS.

Belongs to the protein kinase superfamily. Ser/Thr protein kinase family. Aurora subfamily. Part of a complex composed of NEDD9, AURKA and CTTN; within the complex NEDD9 acts as a scaffold protein and is required for complex formation. Identified in a complex with AUNIP and NIN. Interacts with CPEB1, JTB, TACC1, TPX2, PPP2CA, as well as with the protein phosphatase type 1 (PP1) isoforms PPP1CA, PPP1CB and PPP1CC. Also interacts with its substrates ARHGEF2, BORA, KIF2A, PARD3, and p53/TP53. Interaction with BORA promotes phosphorylation of PLK1. Interacts with GADD45A, competing with its oligomerization. Interacts with FBXL7 and CIMAP3. Interacts (via C-terminus) with AUNIP (via C-terminus). Interacts with SIRT2. Interacts with FRY; this interaction facilitates AURKA-mediated PLK1 phosphorylation. Interacts with MYCN; interaction is phospho-independent and triggers AURKA activation; AURKA competes with FBXW7 for binding to unphosphorylated MYCN but not for binding to phosphorylated MYCN. Interacts with HNRNPU. Interacts with AAAS. Interacts with KLHL18 and CUL3. Interacts with FOXP1. Interacts with HDAC6; AURKA-mediated phosphorylation of HDAC6 promotes deacetylation of alpha-tubulin. Activated by phosphorylation at Thr-279; this brings about a change in the conformation of the activation segment. Phosphorylation at Thr-279 varies during the cell cycle and is highest during M phase. Autophosphorylated at Thr-279 upon TPX2 binding. Thr-279 can be phosphorylated by several kinases, including PAK and PKA. Protein phosphatase type 1 (PP1) binds AURKA and inhibits its activity by dephosphorylating Thr-279 during mitosis. Phosphorylation at Ser-333 decreases the kinase activity. PPP2CA controls degradation by dephosphorylating Ser-52 at the end of mitosis. Post-translationally, ubiquitinated by the anaphase-promoting complex (APC), leading to its degradation by the proteasome. Ubiquitinated by CHFR, leading to its degradation by the proteasome. Ubiquitinated by the E3 ubiquitin-protein ligase complex SCF(FBXL7) during mitosis, leading to its degradation by the proteasome. As to expression, detected in embryonic neurons in dorsal root ganglia and brain cortex (at protein level). Highly expressed in testis, in about one third of the seminiferous tubules. Expression is restricted to specific spermatocytes nearing completion of prophase, with levels falling off on transition to elongated spermatids. Highly expressed in the ovary, expression in the oocyte starts around the transition to large growing follicle. Abundant expression is seen in the proliferating granulosa and thecal cells of the growing follicle, and in the young corpus luteum. Very weakly expressed in spleen and intestine.

It localises to the cytoplasm. It is found in the cytoskeleton. Its subcellular location is the microtubule organizing center. The protein resides in the centrosome. The protein localises to the spindle pole. It localises to the centriole. It is found in the cell projection. Its subcellular location is the neuron projection. The protein resides in the cilium. The protein localises to the cilium basal body. It localises to the basolateral cell membrane. It carries out the reaction L-seryl-[protein] + ATP = O-phospho-L-seryl-[protein] + ADP + H(+). It catalyses the reaction L-threonyl-[protein] + ATP = O-phospho-L-threonyl-[protein] + ADP + H(+). Activation of CDK1, appears to be an upstream event of AURKA activation. Phosphatase inhibitor-2 (PPP1R2) and TPX2 act also as activators. Inactivated by the G2 checkpoint. Inhibited by GADD45A and p53/TP53, and through dephosphorylation by protein phosphatase type 1 (PP1). MLN8054 is also a potent and selective inhibitor. Activated during the early phase of cilia disassembly in the presence of CIMAP3. Inhibited by the small molecule inhibitor VX-680. Functionally, mitotic serine/threonine kinase that contributes to the regulation of cell cycle progression. Associates with the centrosome and the spindle microtubules during mitosis and plays a critical role in various mitotic events including the establishment of mitotic spindle, centrosome duplication, centrosome separation as well as maturation, chromosomal alignment, spindle assembly checkpoint, and cytokinesis. Required for normal spindle positioning during mitosis and for the localization of NUMA1 and DCTN1 to the cell cortex during metaphase. Required for initial activation of CDK1 at centrosomes. Phosphorylates numerous target proteins, including ARHGEF2, BORA, BRCA1, CDC25B, DLGP5, HDAC6, KIF2A, LATS2, NDEL1, PARD3, PPP1R2, PLK1, RASSF1, TACC3, p53/TP53 and TPX2. Phosphorylates MCRS1 which is required for MCRS1-mediated kinetochore fiber assembly and mitotic progression. Regulates KIF2A tubulin depolymerase activity. Required for normal axon formation. Plays a role in microtubule remodeling during neurite extension. Important for microtubule formation and/or stabilization. Also acts as a key regulatory component of the p53/TP53 pathway, and particularly the checkpoint-response pathways critical for oncogenic transformation of cells, by phosphorylating and destabilizing p53/TP53. Phosphorylates its own inhibitors, the protein phosphatase type 1 (PP1) isoforms, to inhibit their activity. Inhibits cilia outgrowth. Required for cilia disassembly via phosphorylation of HDAC6 and subsequent deacetylation of alpha-tubulin. Regulates protein levels of the anti-apoptosis protein BIRC5 by suppressing the expression of the SCF(FBXL7) E3 ubiquitin-protein ligase substrate adapter FBXL7 through the phosphorylation of the transcription factor FOXP1. This is Aurora kinase A (Aurka) from Mus musculus (Mouse).